The sequence spans 543 residues: CTP synthase (543 aa).

The interval 1-265 (MARYIFITGG…DDEVLAAFGI (265 aa)) is amidoligase domain. CTP is bound at residue Ser-13. A UTP-binding site is contributed by Ser-13. An ATP-binding site is contributed by 14–19 (SLGKGL). Residue Tyr-54 participates in L-glutamine binding. Residue Asp-71 coordinates ATP. 2 residues coordinate Mg(2+): Asp-71 and Glu-139. Residues 146-148 (DIE), 186-191 (KTKPTQ), and Lys-222 each bind CTP. UTP contacts are provided by residues 186 to 191 (KTKPTQ) and Lys-222. 238 to 240 (RDV) lines the ATP pocket. Residues 291–542 (TIAIVGKYTG…IQAAVVQSRL (252 aa)) enclose the Glutamine amidotransferase type-1 domain. Position 353 (Gly-353) interacts with L-glutamine. The active-site Nucleophile; for glutamine hydrolysis is the Cys-380. L-glutamine-binding positions include 381-384 (FGMQ), Glu-404, and Arg-470. Residues His-515 and Glu-517 contribute to the active site.

Belongs to the CTP synthase family. As to quaternary structure, homotetramer.

It catalyses the reaction UTP + L-glutamine + ATP + H2O = CTP + L-glutamate + ADP + phosphate + 2 H(+). The enzyme catalyses L-glutamine + H2O = L-glutamate + NH4(+). It carries out the reaction UTP + NH4(+) + ATP = CTP + ADP + phosphate + 2 H(+). It functions in the pathway pyrimidine metabolism; CTP biosynthesis via de novo pathway; CTP from UDP: step 2/2. Its activity is regulated as follows. Allosterically activated by GTP, when glutamine is the substrate; GTP has no effect on the reaction when ammonia is the substrate. The allosteric effector GTP functions by stabilizing the protein conformation that binds the tetrahedral intermediate(s) formed during glutamine hydrolysis. Inhibited by the product CTP, via allosteric rather than competitive inhibition. Catalyzes the ATP-dependent amination of UTP to CTP with either L-glutamine or ammonia as the source of nitrogen. Regulates intracellular CTP levels through interactions with the four ribonucleotide triphosphates. This is CTP synthase from Bradyrhizobium sp. (strain BTAi1 / ATCC BAA-1182).